Here is a 353-residue protein sequence, read N- to C-terminus: Inositol 3-kinase (353 aa).

ATP is bound by residues serine 197, 247-250 (GAGD), and asparagine 274. Aspartate 250 functions as the Proton acceptor in the catalytic mechanism.

The protein belongs to the carbohydrate kinase pfkB family.

It catalyses the reaction myo-inositol + ATP = 1D-myo-inositol 3-phosphate + ADP + H(+). Its function is as follows. Kinase that phosphorylates myo-inositol to produce multiple myo-inositol monophosphates. Participates in phytic acid biosynthesis in developing seeds. Phytic acid is the primary storage form of phosphorus in cereal grains and other plant seeds. The polypeptide is Inositol 3-kinase (Arabidopsis thaliana (Mouse-ear cress)).